A 339-amino-acid polypeptide reads, in one-letter code: DNA-directed RNA polymerase subunit alpha (339 aa).

The interval 1–238 is alpha N-terminal domain (alpha-NTD); that stretch reads MVDPIVTKNW…EQLSIFINFD (238 aa). Residues 250–339 form an alpha C-terminal domain (alpha-CTD) region; sequence VEEQKLNENL…KAAPQGAPKV (90 aa).

This sequence belongs to the RNA polymerase alpha chain family. In terms of assembly, homodimer. The RNAP catalytic core consists of 2 alpha, 1 beta, 1 beta' and 1 omega subunit. When a sigma factor is associated with the core the holoenzyme is formed, which can initiate transcription.

The enzyme catalyses RNA(n) + a ribonucleoside 5'-triphosphate = RNA(n+1) + diphosphate. Its function is as follows. DNA-dependent RNA polymerase catalyzes the transcription of DNA into RNA using the four ribonucleoside triphosphates as substrates. In Anaeromyxobacter dehalogenans (strain 2CP-C), this protein is DNA-directed RNA polymerase subunit alpha.